The chain runs to 242 residues: Octanoyltransferase (242 aa).

The BPL/LPL catalytic domain occupies 31 to 206 (SQTTDEIWFL…LFLKNFGYNQ (176 aa)). Residues 70-77 (RGGQVTYH), 137-139 (SIG), and 150-152 (GLA) contribute to the substrate site. C168 acts as the Acyl-thioester intermediate in catalysis.

It belongs to the LipB family.

The protein resides in the cytoplasm. The catalysed reaction is octanoyl-[ACP] + L-lysyl-[protein] = N(6)-octanoyl-L-lysyl-[protein] + holo-[ACP] + H(+). Its pathway is protein modification; protein lipoylation via endogenous pathway; protein N(6)-(lipoyl)lysine from octanoyl-[acyl-carrier-protein]: step 1/2. Its function is as follows. Catalyzes the transfer of endogenously produced octanoic acid from octanoyl-acyl-carrier-protein onto the lipoyl domains of lipoate-dependent enzymes. Lipoyl-ACP can also act as a substrate although octanoyl-ACP is likely to be the physiological substrate. The chain is Octanoyltransferase from Coxiella burnetii (strain CbuG_Q212) (Coxiella burnetii (strain Q212)).